We begin with the raw amino-acid sequence, 101 residues long: Small ribosomal subunit protein uS14 (101 aa).

The interval 33–69 (SQDASYEEKIDASTKLQKLPRDSSPSRHRNRCELSGR) is disordered. Residues 51–68 (LPRDSSPSRHRNRCELSG) show a composition bias toward basic and acidic residues.

Belongs to the universal ribosomal protein uS14 family. In terms of assembly, part of the 30S ribosomal subunit. Contacts proteins S3 and S10.

Binds 16S rRNA, required for the assembly of 30S particles and may also be responsible for determining the conformation of the 16S rRNA at the A site. The polypeptide is Small ribosomal subunit protein uS14 (Xanthomonas axonopodis pv. citri (strain 306)).